Here is a 633-residue protein sequence, read N- to C-terminus: Electron transfer flavoprotein-ubiquinone oxidoreductase, mitochondrial (633 aa).

Residues 1 to 90 constitute a mitochondrion transit peptide; that stretch reads MHRFLVKLSS…NGITSSRCIS (90 aa). 102–116 lines the FAD pocket; the sequence is VLIVGAGPAGLSAAI. Residues 140–161 lie within the membrane without spanning it; that stretch reads VGGHIISGNVFEPLALDELLPH. Residues G334 and G335 each coordinate a ubiquinone. The stretch at 401–421 is an intramembrane region; it reads IPYPVFPGGAIIGCSAGFLNV. [4Fe-4S] cluster contacts are provided by C578, C602, C605, and C608. A 4Fe-4S ferredoxin-type domain is found at 593–622; it reads PKLQINAQNCLHCKACDIKDPKQNIEWTVP.

This sequence belongs to the ETF-QO/FixC family. The cofactor is [4Fe-4S] cluster. FAD serves as cofactor.

It is found in the mitochondrion inner membrane. The enzyme catalyses a ubiquinone + reduced [electron-transfer flavoprotein] = a ubiquinol + oxidized [electron-transfer flavoprotein] + H(+). With respect to regulation, up-regulated by KIN10, by S1-bZIP specific dimers, and also by C/S1 bZIP heterodimers. Functionally, accepts electrons from ETF and reduces ubiquinone. May act downstream of IVD and D2HGDH in the degradation of phytol or chlorophyll during dark-induced senescence and sugar starvation. The chain is Electron transfer flavoprotein-ubiquinone oxidoreductase, mitochondrial (ETFQO) from Arabidopsis thaliana (Mouse-ear cress).